A 232-amino-acid chain; its full sequence is Chalcone--flavanone isomerase (232 aa).

Positions 50 and 192 each coordinate substrate.

This sequence belongs to the chalcone isomerase family.

It catalyses the reaction a chalcone = a flavanone.. Its pathway is secondary metabolite biosynthesis; flavonoid biosynthesis. In terms of biological role, catalyzes the intramolecular cyclization of bicyclic chalcones into tricyclic (S)-flavanones. Responsible for the isomerization of 4,2',4',6'-tetrahydroxychalcone (also termed chalcone) into naringenin. The polypeptide is Chalcone--flavanone isomerase (CHI) (Saussurea medusa (Saw-wort)).